The sequence spans 345 residues: Protoheme IX farnesyltransferase (345 aa).

Transmembrane regions (helical) follow at residues 33–53, 54–74, 105–125, 126–146, 154–174, 182–202, 226–246, 247–267, and 315–335; these read VMSLVVFTALTGLLAARTPIH, PLLGAVAVLCIAIGAGASGAL, ATLGVVLSLLSVMLMGMAINW, LAAGLLAFTIVFYAVVYTMWL, IVIGGLAGALPPAIGWAAATG, LMVLIIFLWTPPHFWALSLYI, QILLYSLALIPVCLAPAFTGL, GGWLYLAVSGLGGLVFLTLAV, and ILYLFALFAALLAEAVLGLPI.

The protein belongs to the UbiA prenyltransferase family. Protoheme IX farnesyltransferase subfamily.

The protein localises to the cell inner membrane. It catalyses the reaction heme b + (2E,6E)-farnesyl diphosphate + H2O = Fe(II)-heme o + diphosphate. The protein operates within porphyrin-containing compound metabolism; heme O biosynthesis; heme O from protoheme: step 1/1. Functionally, converts heme B (protoheme IX) to heme O by substitution of the vinyl group on carbon 2 of heme B porphyrin ring with a hydroxyethyl farnesyl side group. This is Protoheme IX farnesyltransferase from Caulobacter sp. (strain K31).